A 2193-amino-acid polypeptide reads, in one-letter code: ATP-dependent helicase BRM (2193 aa).

The residue at position 1 (Met1) is an N-acetylmethionine. Residues 1–10 are compositionally biased toward gly residues; that stretch reads MQSGGSGGGP. 5 disordered regions span residues 1–126, 175–231, 293–466, 511–558, and 580–649; these read MQSG…QEGQ, MQDL…PGNM, QKAG…GFTK, SPAI…DNVG, and TSTD…ASAR. The segment covering 23-62 has biased composition (low complexity); sequence ASTSSAASPSSSSSSVQQQQQQQQQQQQQQQLASRQQQQQ. A coiled-coil region spans residues 38–58; the sequence is VQQQQQQQQQQQQQQQLASRQ. Positions 79–88 are enriched in gly residues; it reads GVQGMMGGGN. 3 stretches are compositionally biased toward low complexity: residues 91–102, 110–126, and 180–192; these read SSPGSMQMPQQS, QQQQQQQQQGSSTQEGQ, and PSSQPQASSSKPS. The span at 204 to 223 shows a compositional bias: polar residues; that stretch reads ESSSQQRNETKSHPQQQVGT. Positions 301–320 are enriched in low complexity; the sequence is ASQSPSIPISSQPASSSVVP. Polar residues-rich tracts occupy residues 325–339, 347–358, 383–412, and 421–433; these read PHANSASDISGQSGS, STGSFASTSSPR, QPTNGMPSGNPLQTSANETPVLDQNASTKK, and QMQQPRQLNTPTP. Residues 445 to 463 are compositionally biased toward low complexity; it reads SNSSLQSGQGTQQAQQRSG. Residues 463–499 form the QLQ domain; that stretch reads GFTKQQLHVLKAQILAFRRLKKGEGSLPPELLQAISP. 2 stretches are compositionally biased toward basic and acidic residues: residues 517 to 537 and 611 to 621; these read VQDRSSDKTGEDQARSLECGK and PRSDSTADKGK. A compositionally biased stretch (polar residues) spans 626–638; that stretch reads DGSQSKVPPQANS. The Nuclear localization signal 1 signature appears at 705-712; that stretch reads LKKINGLL. Residues 726-795 are a coiled coil; that stretch reads VLRLQIEEKK…QKAVREKQLK (70 aa). The Helicase ATP-binding domain occupies 993–1158; the sequence is LSLYNNKLNG…WSLLNLLLPD (166 aa). 1006–1013 is an ATP binding site; it reads DEMGLGKT. A coiled-coil region spans residues 1109–1129; it reads DEAQRMKDRESVLARDLDRYR. A Helicase C-terminal domain is found at 1312–1489; it reads ILDRILIKLQ…QYKIDMADEV (178 aa). Disordered stretches follow at residues 1583–1775 and 1789–1894; these read SKKP…DEEQ and LRPR…NAGA. A compositionally biased stretch (basic residues) spans 1608 to 1617; that stretch reads KRGRPKSKKI. A coiled-coil region spans residues 1618–1638; sequence NYKEIEDDIAGYSEESSEERN. At Ser1641 the chain carries Phosphoserine. Positions 1642–1657 are enriched in acidic residues; it reads GNEEEGDIRQFDDDEL. Over residues 1821–1832 the composition is skewed to basic and acidic residues; the sequence is TVVDSHSSRQDQ. Positions 1833–1842 are enriched in low complexity; sequence SDSSSRLRSV. Polar residues-rich tracts occupy residues 1848–1870 and 1882–1892; these read ASTSKLHVSSPKSGRLNATQLTV and DGTSPISSSNA. Residues 1895 to 2005 form the Bromo domain; the sequence is RMSHIIQKRC…NLFFDLLKMS (111 aa). The short motif at 1901–1908 is the Nuclear localization signal 2 element; sequence QKRCKIVI. Over residues 2022 to 2032 the composition is skewed to polar residues; it reads GSAPTLVSTPT. The disordered stretch occupies residues 2022 to 2193; it reads GSAPTLVSTP…DSGKRRPSHL (172 aa). The residue at position 2137 (Ser2137) is a Phosphoserine. Residues 2149 to 2166 show a composition bias toward polar residues; sequence LAQQQRWPNQPTHPNNSG.

It belongs to the SNF2/RAD54 helicase family. As to quaternary structure, interacts with SWI3B, SWI3C, H3 and H4, but not with SWI3A, SWI3D or BSH. Interacts with LFY. Interacts with REF6. Binds to FGT1. In terms of tissue distribution, highly expressed in inflorescences and leaves. Low expression in siliques, roots and seedlings. Detected in shoot apical meristem, root meristem, vascular tissue of developing leaves, petals, stamens filaments, anthers and carpels.

It is found in the nucleus. It catalyses the reaction ATP + H2O = ADP + phosphate + H(+). Functionally, ATPase subunit of a multiprotein complex equivalent of the SWI/SNF complex that acts by remodeling the chromatin by catalyzing an ATP-dependent alteration in the structure of nucleosomal DNA. Represses embryonic genes in leaves and controls shoot development and flowering. Activates flower homeotic genes. The association of BRM with its target genes requires REF6. Necessary to acquire heat stress (HS) memory, by globally binding to HS memory genes. This is ATP-dependent helicase BRM from Arabidopsis thaliana (Mouse-ear cress).